We begin with the raw amino-acid sequence, 349 residues long: Peptide transport system ATP-binding protein SapD (349 aa).

Positions 1–259 (MALLDICNLN…PHHPYTQALI (259 aa)) constitute an ABC transporter domain. 40–47 (GESGSGKS) contributes to the ATP binding site.

It belongs to the ABC transporter superfamily.

It is found in the cell inner membrane. Its function is as follows. Involved in a peptide intake transport system that plays a role in the resistance to antimicrobial peptides. This is Peptide transport system ATP-binding protein SapD (sapD) from Haemophilus influenzae (strain ATCC 51907 / DSM 11121 / KW20 / Rd).